The chain runs to 369 residues: Phosphoribosylformylglycinamidine cyclo-ligase (369 aa).

The interval 1–22 (MSKRDTSQPKTGQPKTSKRRNG) is disordered.

This sequence belongs to the AIR synthase family.

The protein resides in the cytoplasm. It catalyses the reaction 2-formamido-N(1)-(5-O-phospho-beta-D-ribosyl)acetamidine + ATP = 5-amino-1-(5-phospho-beta-D-ribosyl)imidazole + ADP + phosphate + H(+). It functions in the pathway purine metabolism; IMP biosynthesis via de novo pathway; 5-amino-1-(5-phospho-D-ribosyl)imidazole from N(2)-formyl-N(1)-(5-phospho-D-ribosyl)glycinamide: step 2/2. The chain is Phosphoribosylformylglycinamidine cyclo-ligase from Mesorhizobium japonicum (strain LMG 29417 / CECT 9101 / MAFF 303099) (Mesorhizobium loti (strain MAFF 303099)).